Consider the following 788-residue polypeptide: Diacylglycerol kinase gamma (788 aa).

Residues 83–93 show a composition bias toward basic and acidic residues; it reads PRQETPDHPKE. Positions 83–150 are disordered; that stretch reads PRQETPDHPK…WGEPNAPASS (68 aa). A compositionally biased stretch (polar residues) spans 95-109; that stretch reads ASSSEPNVSDSNAES. EF-hand domains are found at residues 172–207 and 217–252; these read RPQDKLEFMFRLYDSDENELLDQAELDQIVSQMLHV and ELRPILKEMLQGMDYNKDGFVSLEEWVSGGMTTIPL. The Ca(2+) site is built by aspartate 185, aspartate 187, asparagine 189, glutamate 196, aspartate 230, asparagine 232, aspartate 234, and glutamate 241. Phorbol-ester/DAG-type zinc fingers lie at residues 268 to 318 and 333 to 380; these read RHAW…IPGC and QHAW…STAC. In terms of domain architecture, DAGKc spans 427–561; it reads PGTHPLLVLV…LDRWYLEVMP (135 aa). A disordered region spans residues 768 to 788; that stretch reads MMGPPQKSSFFSLRRKSRSKD.

The protein belongs to the eukaryotic diacylglycerol kinase family. In terms of tissue distribution, expressed specifically in brain. Highly expressed in cerebellar Purkinje cells (at protein level).

It is found in the membrane. Its subcellular location is the cytoplasm. The protein localises to the cytosol. The protein resides in the cytoskeleton. The enzyme catalyses a 1,2-diacyl-sn-glycerol + ATP = a 1,2-diacyl-sn-glycero-3-phosphate + ADP + H(+). The catalysed reaction is 1,2-didecanoyl-sn-glycerol + ATP = 1,2-didecanoyl-sn-glycero-3-phosphate + ADP + H(+). It carries out the reaction 1,2-di-(9Z-octadecenoyl)-sn-glycerol + ATP = 1,2-di-(9Z-octadecenoyl)-sn-glycero-3-phosphate + ADP + H(+). It catalyses the reaction 1-octadecanoyl-2-(9Z,12Z)-octadecadienoyl-sn-glycerol + ATP = 1-octadecanoyl-2-(9Z,12Z-octadecadienoyl)-sn-glycero-3-phosphate + ADP + H(+). The enzyme catalyses 1-octadecanoyl-2-(5Z,8Z,11Z,14Z-eicosatetraenoyl)-sn-glycerol + ATP = 1-octadecanoyl-2-(5Z,8Z,11Z,14Z-eicosatetraenoyl)-sn-glycero-3-phosphate + ADP + H(+). The protein operates within lipid metabolism; glycerolipid metabolism. With respect to regulation, the activity is calcium-dependent. Requires phosphatidylserine for maximal activity. Functionally, diacylglycerol kinase that converts diacylglycerol/DAG into phosphatidic acid/phosphatidate/PA and regulates the respective levels of these two bioactive lipids. Thereby, acts as a central switch between the signaling pathways activated by these second messengers with different cellular targets and opposite effects in numerous biological processes. Has no apparent specificity with regard to the acyl compositions of diacylglycerol. Specifically expressed in the cerebellum where it controls the level of diacylglycerol which in turn regulates the activity of protein kinase C gamma. Through protein kinase C gamma, indirectly regulates the dendritic development of Purkinje cells, cerebellar long term depression and ultimately cerebellar motor coordination. This chain is Diacylglycerol kinase gamma (Dgkg), found in Rattus norvegicus (Rat).